The primary structure comprises 299 residues: Acarbose 7(IV)-phosphotransferase (299 aa).

This sequence belongs to the carbohydrate kinase PfkB family.

The enzyme catalyses acarbose + ATP = acarbose 7(IV)-phosphate + ADP + H(+). In terms of biological role, catalyzes the phosphorylation of the alpha-glucosidase inhibitor acarbose. Phosphorylation of acarbose could be a resistance-like self-protection mechanism. The chain is Acarbose 7(IV)-phosphotransferase from Actinoplanes sp. (strain ATCC 31044 / CBS 674.73 / SE50/110).